Here is a 341-residue protein sequence, read N- to C-terminus: Inner membrane ABC transporter permease protein YejE (341 aa).

The Cytoplasmic portion of the chain corresponds to 1–21 (MSRLSPVNQARWARFRHNRRG). Residues 22–42 (YWSLWIFLVLFGLSLCSELIA) traverse the membrane as a helical segment. Over 43 to 143 (NDKPLLVRYD…ARILYGTRIS (101 aa)) the chain is Periplasmic. Positions 140–332 (TRISVLFGLM…LLIFIGEAVR (193 aa)) constitute an ABC transmembrane type-1 domain. The helical transmembrane segment at 144-164 (VLFGLMLTLCSSVMGVLAGAL) threads the bilayer. Residues 165–178 (QGYYGGKVDLWGQR) are Cytoplasmic-facing. Residues 179–199 (FIEVWSGMPTLFLIILLSSVV) traverse the membrane as a helical segment. Residues 200–201 (QP) are Periplasmic-facing. A helical transmembrane segment spans residues 202–222 (NFWWLLAITVLFGWMSLVGVV). Residues 223–252 (RAEFLRTRNFDYIRAAQALGVSDRSIILRH) lie on the Cytoplasmic side of the membrane. The chain crosses the membrane as a helical span at residues 253–273 (MLPNAMVATLTFLPFILCSSI). The Periplasmic portion of the chain corresponds to 274–307 (TTLTSLDFLGFGLPLGSPSLGELLLQGKNNLQAP). The helical transmembrane segment at 308–328 (WLGITAFLSVAILLSLLIFIG) threads the bilayer. Over 329–341 (EAVRDAFDPNKAV) the chain is Cytoplasmic.

The protein belongs to the binding-protein-dependent transport system permease family. OppBC subfamily.

It is found in the cell inner membrane. Probably part of a binding-protein-dependent transport system. Probably responsible for the translocation of the substrate across the membrane. The sequence is that of Inner membrane ABC transporter permease protein YejE (yejE) from Escherichia coli (strain K12).